The primary structure comprises 705 residues: 3-hydroxypropionate--CoA ligase [ADP-forming] (705 aa).

Residues Lys-25–Lys-61 form the ATP-grasp domain. Position 51 to 61 (Ala-51 to Lys-61) interacts with ATP.

This sequence in the N-terminal section; belongs to the acetate CoA ligase beta subunit family. The protein in the C-terminal section; belongs to the acetate CoA ligase alpha subunit family. Requires Mg(2+) as cofactor. Mn(2+) is required as a cofactor.

It catalyses the reaction 3-hydroxypropanoate + ATP + CoA = 3-hydroxypropanoyl-CoA + ADP + phosphate. Its function is as follows. Involved in thaumarchaeal hydroxypropionate/hydroxybutyrate (HP/HB) cycle, a modified version of the autotrophic HP/HB cycle of Crenarchaeota. Catalyzes the formation of 3-hydroxypropionyl-CoA, ADP and phosphate from 3-hydroxypropionate, coenzyme A (CoA) and ATP. Can also use 4-hydroxybutyrate, propionate and butyrate, with poor catalytic efficiency. This Nitrosopumilus maritimus (strain SCM1) protein is 3-hydroxypropionate--CoA ligase [ADP-forming].